The chain runs to 184 residues: Ribosome-recycling factor (184 aa).

This sequence belongs to the RRF family.

It is found in the cytoplasm. In terms of biological role, responsible for the release of ribosomes from messenger RNA at the termination of protein biosynthesis. May increase the efficiency of translation by recycling ribosomes from one round of translation to another. This chain is Ribosome-recycling factor, found in Thermoanaerobacter pseudethanolicus (strain ATCC 33223 / 39E) (Clostridium thermohydrosulfuricum).